We begin with the raw amino-acid sequence, 247 residues long: DNA polymerase sliding clamp (247 aa).

Belongs to the PCNA family. As to quaternary structure, homotrimer. The subunits circularize to form a toroid; DNA passes through its center. Replication factor C (RFC) is required to load the toroid on the DNA.

Sliding clamp subunit that acts as a moving platform for DNA processing. Responsible for tethering the catalytic subunit of DNA polymerase and other proteins to DNA during high-speed replication. The sequence is that of DNA polymerase sliding clamp from Methanoregula boonei (strain DSM 21154 / JCM 14090 / 6A8).